A 305-amino-acid polypeptide reads, in one-letter code: Urease accessory protein UreD (305 aa).

The protein belongs to the UreD family. As to quaternary structure, ureD, UreF and UreG form a complex that acts as a GTP-hydrolysis-dependent molecular chaperone, activating the urease apoprotein by helping to assemble the nickel containing metallocenter of UreC. The UreE protein probably delivers the nickel.

It localises to the cytoplasm. In terms of biological role, required for maturation of urease via the functional incorporation of the urease nickel metallocenter. The polypeptide is Urease accessory protein UreD (Delftia acidovorans (strain DSM 14801 / SPH-1)).